The sequence spans 458 residues: Methionine aminopeptidase 2-2 (458 aa).

A compositionally biased stretch (basic and acidic residues) spans 1 to 14 (MGSKTPERDGHKGQ). The tract at residues 1–93 (MGSKTPERDG…QSSPPRVPLS (93 aa)) is disordered. A compositionally biased stretch (basic residues) spans 67-82 (QKKKRKSKKKGKKKAA). His209 contacts substrate. Asp230, Asp241, and His310 together coordinate a divalent metal cation. His318 contributes to the substrate binding site. Residues Glu343 and Glu439 each contribute to the a divalent metal cation site.

This sequence belongs to the peptidase M24A family. Methionine aminopeptidase eukaryotic type 2 subfamily. It depends on Co(2+) as a cofactor. The cofactor is Zn(2+). Mn(2+) serves as cofactor. Requires Fe(2+) as cofactor.

Its subcellular location is the cytoplasm. It catalyses the reaction Release of N-terminal amino acids, preferentially methionine, from peptides and arylamides.. Cotranslationally removes the N-terminal methionine from nascent proteins. The N-terminal methionine is often cleaved when the second residue in the primary sequence is small and uncharged (Met-Ala-, Cys, Gly, Pro, Ser, Thr, or Val). The sequence is that of Methionine aminopeptidase 2-2 from Emericella nidulans (strain FGSC A4 / ATCC 38163 / CBS 112.46 / NRRL 194 / M139) (Aspergillus nidulans).